We begin with the raw amino-acid sequence, 451 residues long: 1,3-beta-glucanosyltransferase PGA4 (451 aa).

An N-terminal signal peptide occupies residues 1–18; it reads MLFRSLVTYLSLVSSVLS. Tyr81 contacts (1,3-beta-D-glucosyl)n. N-linked (GlcNAc...) asparagine glycosylation is present at Asn88. (1,3-beta-D-glucosyl)n contacts are provided by residues 108–116, Asn151, Glu152, and Arg198; that span reads NTPHSSITR. Glu152 acts as the Proton donor in catalysis. N-linked (GlcNAc...) asparagine glycosylation occurs at Asn245. Residue Glu254 is the Nucleophile of the active site. Tyr286 lines the (1,3-beta-D-glucosyl)n pocket. Residues 316–336 form a disordered region; the sequence is SQFEKTKNPSGDGGYLKSTGG. Asn347, Asn394, and Asn422 each carry an N-linked (GlcNAc...) asparagine glycan. The segment at 395 to 427 is disordered; it reads YTSSITASSRASPSQTSQVSSSSATSANSTSSK. Residues 396-426 show a composition bias toward low complexity; it reads TSSITASSRASPSQTSQVSSSSATSANSTSS. Asp430 is lipidated: GPI-anchor amidated aspartate. Positions 431 to 451 are cleaved as a propeptide — removed in mature form; it reads AAVEGAGFLSVIALAAGIALL.

Belongs to the glycosyl hydrolase 72 family. Post-translationally, the GPI-anchor is attached to the protein in the endoplasmic reticulum and serves to target the protein to the cell surface. There, the glucosamine-inositol phospholipid moiety is cleaved off and the GPI-modified mannoprotein is covalently attached via its lipidless GPI glycan remnant to the 1,6-beta-glucan of the outer cell wall layer.

The protein localises to the secreted. It is found in the cell wall. It localises to the membrane. Its function is as follows. Splits internally a 1,3-beta-glucan molecule and transfers the newly generated reducing end (the donor) to the non-reducing end of another 1,3-beta-glucan molecule (the acceptor) forming a 1,3-beta linkage, resulting in the elongation of 1,3-beta-glucan chains in the cell wall. Involved in cell wall biosynthesis and morphogenesis. Plays a key role in virulence. The polypeptide is 1,3-beta-glucanosyltransferase PGA4 (PGA4) (Candida albicans (strain SC5314 / ATCC MYA-2876) (Yeast)).